A 490-amino-acid polypeptide reads, in one-letter code: Cytochrome P450 90D2 (490 aa).

Residues alanine 4–leucine 24 form a helical membrane-spanning segment. Cysteine 437 contacts heme.

It belongs to the cytochrome P450 family. It depends on heme as a cofactor.

It is found in the membrane. The enzyme catalyses 6-deoxoteasterone + reduced [NADPH--hemoprotein reductase] + O2 = 3-dehydro-6-deoxoteasterone + oxidized [NADPH--hemoprotein reductase] + 2 H2O + H(+). It participates in plant hormone biosynthesis; brassinosteroid biosynthesis. Functionally, catalyzes the C6-oxidation step in brassinosteroids biosynthesis. May convert 6-deoxoteasterone (6-deoxoTE) to 3-dehydro-6-deoxoteasterone (6-deoxo3DT, 6-deoxo3DHT), and teasterone (TE) to 3-dehydroteasterone (3DT, 3-DHT). Involved in the elongation of leaf sheaths and stems. The chain is Cytochrome P450 90D2 from Oryza sativa subsp. indica (Rice).